A 434-amino-acid polypeptide reads, in one-letter code: MYDYHQPDLAGHFGIYGGSFVSETLTHAINELKDAYARYQNDPKFLAEFNYELKHFVGRPSPIYHAARMSREQGGAQIYLKREDLNHTGAHKINNTIGQAMLARRMGKQRIIAETGAGQHGVATATICARYGLECVVYMGSEDVKRQSPNVYRMNLLGATVVPVESGSKTLKDALNEAMRDWVANVDNTFYIIGTVAGPHPYPMMVRDFQSVIGTECLSQMPEMNAGRQPDAVVACVGGGSNAMGIFHPYIAHENTRLIGVEAAGEGLDSGKHSASLQRGLPGVLHGNRTYVLQNDDGQVTETHSISAGLDYPGVGPEHAYLKDIGRAEYVGITDTEALQAFHYLCRTEGIIPALESAHAVAYAMKLAKTMRSDQSILVNLSGRGDKDIGTVADLSGADFYDRPSMRGLGVKGGVATSPESFDASGAKGAGSQS.

N6-(pyridoxal phosphate)lysine is present on Lys92. The disordered stretch occupies residues 411–434; it reads VKGGVATSPESFDASGAKGAGSQS.

This sequence belongs to the TrpB family. As to quaternary structure, tetramer of two alpha and two beta chains. Pyridoxal 5'-phosphate is required as a cofactor.

The catalysed reaction is (1S,2R)-1-C-(indol-3-yl)glycerol 3-phosphate + L-serine = D-glyceraldehyde 3-phosphate + L-tryptophan + H2O. It participates in amino-acid biosynthesis; L-tryptophan biosynthesis; L-tryptophan from chorismate: step 5/5. In terms of biological role, the beta subunit is responsible for the synthesis of L-tryptophan from indole and L-serine. The protein is Tryptophan synthase beta chain of Polaromonas naphthalenivorans (strain CJ2).